Consider the following 113-residue polypeptide: uncharacterized protein (113 aa).

Disordered stretches follow at residues 1–22 and 90–113; these read MGEH…PLAQ and DGRH…SDDL. The span at 90-99 shows a compositional bias: basic and acidic residues; the sequence is DGRHTTESSF. A compositionally biased stretch (low complexity) spans 100-113; it reads EHSSPSRSPQSDDL.

This is an uncharacterized protein from Mycobacterium tuberculosis (strain ATCC 25618 / H37Rv).